A 278-amino-acid chain; its full sequence is Insulin-like growth factor-binding protein-like 1 (278 aa).

The N-terminal stretch at 1 to 25 (MPRLSLLLPLLLLLLLPLLPPLSPS) is a signal peptide. In terms of domain architecture, IGFBP N-terminal spans 34-109 (RRPKCGPCRP…PEGTGLCVCA (76 aa)). Intrachain disulfides connect cysteine 38/cysteine 63, cysteine 41/cysteine 65, cysteine 46/cysteine 66, cysteine 52/cysteine 69, cysteine 77/cysteine 91, cysteine 85/cysteine 106, and cysteine 115/cysteine 151. Residues 95-153 (AAGAAPEGTGLCVCAQRGTVCGSDGRSYPSVCALRLRARHTPRAHPGHLHKARDGPCEF) form the Kazal-like domain. Positions 155–259 (PVVVVPPRSV…GEAESHSTVT (105 aa)) constitute an Ig-like C2-type domain. A glycan (N-linked (GlcNAc...) asparagine) is linked at asparagine 166. Cysteine 176 and cysteine 243 are joined by a disulfide.

In terms of tissue distribution, expressed at the highest level in both brain and testis, with lower levels in the prostate, bladder and lung.

It is found in the secreted. Its function is as follows. IGF-binding proteins prolong the half-life of IGFs and have been shown to either inhibit or stimulate the growth promoting effects of the IGFs in cell culture. They alter the interaction of IGFs with their cell surface receptors. May be a putative tumor suppressor protein. This chain is Insulin-like growth factor-binding protein-like 1 (IGFBPL1), found in Homo sapiens (Human).